The chain runs to 302 residues: EQCGRQAGGALCPGGLCCSQFGWCGSTADYCTVPGCQSQCSGSGPAPGPGGLTNLISRETFNQMLLHRNDGACPARGFYTYDAFIAAARSFPAFATTGDQATRKREIAAFLAQTSHETTGGAGWAAPDGPYAWGYCYNRELNPPSSYCASDPNYPCAPGKQYFGRGPMQLSWNYNYGQCGRAIGVDLLNNPDLLSSDPTISFKSAFWFWMTPQSPKPSCHNVIIGAWSPSSSDRAAGRATGYGVITNIINGGLECGKGWNAQVEDRIGFYKRYCDILGVSYGNNLDCYNQSPFGNGVSVDSM.

Residues 1–42 (EQCGRQAGGALCPGGLCCSQFGWCGSTADYCTVPGCQSQCSG) form the Chitin-binding type-1 domain. Disulfide bonds link Cys-3–Cys-18, Cys-12–Cys-24, Cys-17–Cys-31, Cys-36–Cys-40, Cys-73–Cys-136, Cys-148–Cys-156, and Cys-255–Cys-287. Glu-117 serves as the catalytic Proton donor. The propeptide at 296–302 (GVSVDSM) is removed in mature form.

This sequence belongs to the glycosyl hydrolase 19 family. Chitinase class I subfamily.

It catalyses the reaction Random endo-hydrolysis of N-acetyl-beta-D-glucosaminide (1-&gt;4)-beta-linkages in chitin and chitodextrins.. Its function is as follows. Defense against chitin-containing fungal pathogens. This Gossypium hirsutum (Upland cotton) protein is Endochitinase 2.